The chain runs to 410 residues: Sensor histidine kinase GlnK (410 aa).

Topologically, residues 1–15 (MLITVPLAGELKFYP) are extracellular. Residues 16–36 (LNEEFRVSFGAPVFFFFLSLL) form a helical membrane-spanning segment. Over 37-38 (RH) the chain is Cytoplasmic. The helical transmembrane segment at 39 to 59 (VPAVLPGFLTGAAVFIFRVFL) threads the bilayer. At 60–71 (ELWGGGHNGLTP) the chain is on the extracellular side. A helical transmembrane segment spans residues 72-92 (ILYDQASGFFFYMTYACLFSI). At 93 to 102 (LKANRFRERP) the chain is on the cytoplasmic side. A helical transmembrane segment spans residues 103-123 (IMLGFIGFMIEVVSDCVELTV). Residues 124–139 (QFLIFHTVVTPEKITD) lie on the Extracellular side of the membrane. The chain crosses the membrane as a helical span at residues 140-160 (IAVIAISHTFIVMSFYSVLKL). The Cytoplasmic segment spans residues 161–410 (YETQSREKQT…LPVRHLIQKG (250 aa)). The region spanning 189 to 405 (VHLKKTLKTT…VFAIRLPVRH (217 aa)) is the Histidine kinase domain. His-190 is modified (phosphohistidine; by autocatalysis).

As to quaternary structure, homotrimer. Under poor nitrogen source such as nitrate, the complex between GlnK and AmtB, which are the transmembrane ammonium transporter and its cognate regulator, respectively, interacts with TnrA. GlnK-ATP complex are not able to bind TnrA.

The protein resides in the cell membrane. The enzyme catalyses ATP + protein L-histidine = ADP + protein N-phospho-L-histidine.. Its function is as follows. Member of the two-component regulatory system GlnK/GlnL that positively regulates the expression of the glsA-glnT operon in response to glutamine. It seems that autophosphorylated GlnK transfers a phosphoryl group to GlnL, which positively regulates the expression of the glsA-glnT operon. Interaction between GlnK-AmtB complex and TnrA protects TnrA from proteolytic degradation. The polypeptide is Sensor histidine kinase GlnK (Bacillus subtilis (strain 168)).